The primary structure comprises 109 residues: Small ribosomal subunit protein uS17 (109 aa).

This sequence belongs to the universal ribosomal protein uS17 family. As to quaternary structure, part of the 30S ribosomal subunit.

One of the primary rRNA binding proteins, it binds specifically to the 5'-end of 16S ribosomal RNA. This Methanococcoides burtonii (strain DSM 6242 / NBRC 107633 / OCM 468 / ACE-M) protein is Small ribosomal subunit protein uS17.